Here is a 1188-residue protein sequence, read N- to C-terminus: NF-X1-type zinc finger protein NFXL1 (1188 aa).

The segment covering 1-15 (MSFQVRRDRSDDRSH) has biased composition (basic and acidic residues). 2 disordered regions span residues 1–52 (MSFQ…ETLD) and 65–195 (QHNA…VAKE). Polar residues-rich tracts occupy residues 19-34 (HQQT…SSVV) and 168-186 (ASGT…TRPV). Residues 223 to 279 (CMICYDKVGRSANIWSCSSCYSIFHINCIKRWARAPTSVDLLAEKNQGDNWRCPGCQ) form an RING-type; degenerate zinc finger. 9 NF-X1-type zinc fingers span residues 335–353 (CPHV…PCKA), 390–409 (CGRH…PCQV), 454–473 (CGNH…DCDL), 513–532 (CRLH…PCLV), 572–607 (CGRH…PCQK), 611–630 (CGQH…PCLE), 668–686 (CGHS…PCST), 721–751 (CGMH…TCRQ), and 760–781 (CRHT…RCEF). The R3H domain maps to 894–963 (PKWVLAVEER…KRFTVVHVTA (70 aa)). Positions 1100 to 1188 (SDDSWGAEDS…VVDDWEKVCE (89 aa)) are disordered. Composition is skewed to polar residues over residues 1126 to 1138 (AKSN…SVNR) and 1159 to 1169 (EESSSSKTTGK).

The protein belongs to the NFX1 family. As to expression, expressed in seedlings, roots, stems, leaves, buds, flowers and siliques.

It localises to the nucleus. The protein operates within protein modification; protein ubiquitination. Functionally, mediates E2-dependent ubiquitination. Confers resistance to osmotic stress such as high salinity. Promotes H(2)O(2) production. Negative regulator of some defense-related genes via an salicylic acid (SA)-dependent signaling pathway. Confers susceptibility to the compatible phytopathogen Pseudomonas syringae pv. tomato strain DC3000 (Pst DC3000). Mediates resistance to type A trichothecenes (phytotoxins produced by phytopathogenic fungi). The chain is NF-X1-type zinc finger protein NFXL1 (NFXL1) from Arabidopsis thaliana (Mouse-ear cress).